Here is a 200-residue protein sequence, read N- to C-terminus: Prostamide/prostaglandin F synthase (200 aa).

Belongs to the peroxiredoxin-like PRXL2 family. Prostamide/prostaglandin F synthase subfamily.

The protein resides in the cytoplasm. It is found in the cytosol. The enzyme catalyses prostaglandin H2 + [thioredoxin]-dithiol = prostaglandin F2alpha + [thioredoxin]-disulfide. The catalysed reaction is prostamide F2alpha + [thioredoxin]-disulfide = prostamide H2 + [thioredoxin]-dithiol. Functionally, catalyzes the reduction of prostaglandin-ethanolamide H(2) (prostamide H(2)) to prostamide F(2alpha) with NADPH as proton donor. Also able to reduce prostaglandin H(2) to prostaglandin F(2alpha). This Salmo salar (Atlantic salmon) protein is Prostamide/prostaglandin F synthase (prxl2b).